The sequence spans 97 residues: UPF0235 protein Aasi_0294 (97 aa).

This sequence belongs to the UPF0235 family.

The chain is UPF0235 protein Aasi_0294 from Amoebophilus asiaticus (strain 5a2).